Reading from the N-terminus, the 268-residue chain is Chymotrypsin-C (268 aa).

An N-terminal signal peptide occupies residues methionine 1–cysteine 16. Residues cysteine 17–arginine 29 constitute a propeptide, activation peptide. Intrachain disulfides connect cysteine 17/cysteine 141, cysteine 59/cysteine 75, cysteine 155/cysteine 222, cysteine 186/cysteine 202, and cysteine 212/cysteine 243. Asparagine 25 is a glycosylation site (N-linked (GlcNAc...) asparagine). One can recognise a Peptidase S1 domain in the interval valine 30–glutamine 267. Histidine 74 serves as the catalytic Charge relay system. The N-linked (GlcNAc...) asparagine glycan is linked to asparagine 90. The Charge relay system role is filled by aspartate 121. Serine 216 serves as the catalytic Charge relay system.

It belongs to the peptidase S1 family. Elastase subfamily. In terms of tissue distribution, pancreas.

It carries out the reaction Preferential cleavage: Leu-|-Xaa, Tyr-|-Xaa, Phe-|-Xaa, Met-|-Xaa, Trp-|-Xaa, Gln-|-Xaa, Asn-|-Xaa.. Regulates activation and degradation of trypsinogens and procarboxypeptidases by targeting specific cleavage sites within their zymogen precursors. Has chymotrypsin-type protease activity and hypocalcemic activity. Cleaves TRY4 and TRY5 and thereby inhibits their autoactivation. The chain is Chymotrypsin-C (Ctrc) from Rattus norvegicus (Rat).